The primary structure comprises 639 residues: 1,4-alpha-glucan branching enzyme GlgB (639 aa).

D309 (nucleophile) is an active-site residue. Catalysis depends on E352, which acts as the Proton donor.

It belongs to the glycosyl hydrolase 13 family. GlgB subfamily. As to quaternary structure, monomer.

The enzyme catalyses Transfers a segment of a (1-&gt;4)-alpha-D-glucan chain to a primary hydroxy group in a similar glucan chain.. The protein operates within glycan biosynthesis; glycogen biosynthesis. In terms of biological role, catalyzes the formation of the alpha-1,6-glucosidic linkages in glycogen by scission of a 1,4-alpha-linked oligosaccharide from growing alpha-1,4-glucan chains and the subsequent attachment of the oligosaccharide to the alpha-1,6 position. In Geobacillus stearothermophilus (Bacillus stearothermophilus), this protein is 1,4-alpha-glucan branching enzyme GlgB (glgB).